We begin with the raw amino-acid sequence, 248 residues long: 2,3-bisphosphoglycerate-dependent phosphoglycerate mutase (248 aa).

Residues 8-15, 21-22, R60, 87-90, K98, and 114-115 contribute to the substrate site; these read RHGESVWN, TG, ERHY, and RR. H9 acts as the Tele-phosphohistidine intermediate in catalysis. The active-site Proton donor/acceptor is the E87. Residues 116–135 form a disordered region; sequence SYDTPPPPMEVSDPRHPSHD. Substrate is bound at residue 183–184; it reads GN.

It belongs to the phosphoglycerate mutase family. BPG-dependent PGAM subfamily. Homodimer.

The catalysed reaction is (2R)-2-phosphoglycerate = (2R)-3-phosphoglycerate. The protein operates within carbohydrate degradation; glycolysis; pyruvate from D-glyceraldehyde 3-phosphate: step 3/5. Functionally, catalyzes the interconversion of 2-phosphoglycerate and 3-phosphoglycerate. The chain is 2,3-bisphosphoglycerate-dependent phosphoglycerate mutase from Bdellovibrio bacteriovorus (strain ATCC 15356 / DSM 50701 / NCIMB 9529 / HD100).